Here is a 474-residue protein sequence, read N- to C-terminus: tRNA-2-methylthio-N(6)-dimethylallyladenosine synthase (474 aa).

One can recognise an MTTase N-terminal domain in the interval 3–120 (KKLHIKTWGC…LPEMINHVQE (118 aa)). [4Fe-4S] cluster contacts are provided by C12, C49, C83, C157, C161, and C164. The Radical SAM core domain maps to 143-375 (RAEGPTAFVS…QQRISQQAME (233 aa)). Positions 378-441 (RKMVGTVQRV…ASSLRGILLR (64 aa)) constitute a TRAM domain.

It belongs to the methylthiotransferase family. MiaB subfamily. As to quaternary structure, monomer. [4Fe-4S] cluster is required as a cofactor.

Its subcellular location is the cytoplasm. The catalysed reaction is N(6)-dimethylallyladenosine(37) in tRNA + (sulfur carrier)-SH + AH2 + 2 S-adenosyl-L-methionine = 2-methylsulfanyl-N(6)-dimethylallyladenosine(37) in tRNA + (sulfur carrier)-H + 5'-deoxyadenosine + L-methionine + A + S-adenosyl-L-homocysteine + 2 H(+). Functionally, catalyzes the methylthiolation of N6-(dimethylallyl)adenosine (i(6)A), leading to the formation of 2-methylthio-N6-(dimethylallyl)adenosine (ms(2)i(6)A) at position 37 in tRNAs that read codons beginning with uridine. This chain is tRNA-2-methylthio-N(6)-dimethylallyladenosine synthase, found in Yersinia pseudotuberculosis serotype O:3 (strain YPIII).